The primary structure comprises 66 residues: Conotoxin mr5.2 (66 aa).

Positions 1–19 (MRCVPVFVILLLLIASAPT) are cleaved as a signal peptide. The propeptide occupies 20 to 48 (VDAQLKTKDDMPLASFHANVKRTLQILRD). 2 positions are modified to 4-carboxyglutamate: Glu57 and Glu61. Asn65 is modified (asparagine amide).

Post-translationally, contains 2 disulfide bonds that can be either 'C1-C3, C2-C4' or 'C1-C4, C2-C3', since these disulfide connectivities have been observed for conotoxins with cysteine framework V (for examples, see AC P0DQQ7 and AC P81755). In terms of tissue distribution, expressed by the venom duct.

It localises to the secreted. This is Conotoxin mr5.2 from Conus marmoreus (Marble cone).